Reading from the N-terminus, the 624-residue chain is Chaperone protein HtpG (624 aa).

The segment at 1–336 (MKGQETRGFQ…SNDLPLNVSR (336 aa)) is a; substrate-binding. The tract at residues 337–552 (EILQDSTVTR…ADEMSTQMAK (216 aa)) is b. The segment at 553-624 (LFAAAGQSVP…IRRMNQLLVS (72 aa)) is c.

The protein belongs to the heat shock protein 90 family. Homodimer. In terms of processing, UMPylated on a histidine residue by YdiU under ATP-limited conditions.

The protein resides in the cytoplasm. UMPylation of the chaperone by YdiU negatively regulates its activity, facilitating Salmonella survival under ATP-limited conditions. In terms of biological role, molecular chaperone. Has ATPase activity. The polypeptide is Chaperone protein HtpG (Salmonella typhimurium (strain LT2 / SGSC1412 / ATCC 700720)).